Here is a 25-residue protein sequence, read N- to C-terminus: Kappa-conotoxin RIIIJ (25 aa).

Residues P2, P3, P7, P8, P13, P15, and P21 each carry the 4-hydroxyproline modification. 3 disulfides stabilise this stretch: C4–C17, C5–C22, and C12–C23.

Belongs to the conotoxin M superfamily. As to expression, expressed by the venom duct.

It localises to the secreted. Kappa-conotoxins inhibits voltage-gated potassium channels. This toxin dose-dependently and reversibly inhibits the Kv1.2/KCNA2 channel in mammalia. Does not exert protective effect on cardiac tissue when administered after an ischemic event. This Conus radiatus (Rayed cone) protein is Kappa-conotoxin RIIIJ.